A 670-amino-acid chain; its full sequence is uncharacterized protein (670 aa).

This is an uncharacterized protein from Ictalurid herpesvirus 1 (strain Auburn) (IcHV-1).